A 1162-amino-acid polypeptide reads, in one-letter code: Lysine-specific demethylase 2A (1162 aa).

Ser-28 carries the post-translational modification Phosphoserine. The 169-residue stretch at 148–316 (FSHTRLENMV…MQLKIYNIED (169 aa)) folds into the JmjC domain. Thr-209 contacts substrate. Positions 212 and 214 each coordinate Fe cation. Lys-229 contributes to the substrate binding site. Fe cation is bound at residue His-284. The disordered stretch occupies residues 367-389 (GLESGNGDEEAVDREPRRLSSRR). A phosphoserine mark is found at Ser-390 and Ser-394. A Glycyl lysine isopeptide (Lys-Gly) (interchain with G-Cter in SUMO2) cross-link involves residue Lys-505. The tract at residues 532–557 (VPTIPITKPHTMKPAPRLTPVRPAAA) is disordered. A Phosphothreonine modification is found at Thr-550. Position 558 is a phosphoserine (Ser-558). The segment at 564 to 610 (ARRRRVRCRKCKACVQGECGVCHYCRDMKKFGGPGRMKQSCVLRQCL) adopts a CXXC-type zinc-finger fold. Residues Cys-571, Cys-574, Cys-577, Cys-582, Cys-585, Cys-588, Cys-604, Cys-609, Cys-620, and Cys-623 each coordinate Zn(2+). The PHD-type zinc finger occupies 617–678 (SVTCSLCGEV…CWECPKCYQE (62 aa)). Thr-632 is subject to Phosphothreonine. Positions 642, 645, 650, 653, 672, and 675 each coordinate Zn(2+). Ser-692 is subject to Phosphoserine. Positions 704-789 (PLRSCDEPLT…PSGKKELSEV (86 aa)) are disordered. Thr-713 is modified (phosphothreonine). Residues Ser-718 and Ser-731 each carry the phosphoserine modification. 2 stretches are compositionally biased toward basic and acidic residues: residues 746–757 (SDHHSASRDERF) and 771–789 (TMVR…LSEV). A phosphoserine mark is found at Ser-825, Ser-832, Ser-869, and Ser-883. The disordered stretch occupies residues 839–887 (HCPARTPQRGDEEGLGGEEEEEEEEEEEDDSAEEGGAARLNGRGSWAQD). Acidic residues predominate over residues 851-871 (EGLGGEEEEEEEEEEEDDSAE). An F-box domain is found at 889 to 936 (DESWMQREVWMSVFRYLSRRELCECMRVCKTWYKWCCDKRLWTKIDLS). 2 LRR repeats span residues 961 to 982 (WTNI…LKDL) and 984 to 1010 (LAGC…DLRW). Position 1020 is an ADP-ribosylarginine (Arg-1020). LRR repeat units follow at residues 1048 to 1073 (GLDI…DLSH), 1074 to 1103 (CSHL…NMAG), 1104 to 1128 (CNKL…DLRG), and 1129 to 1156 (CKQI…SDEK).

Belongs to the JHDM1 histone demethylase family. As to quaternary structure, interacts with CBX5/HP1A; the interaction promotes CBX5 localization to chromatin. The SKP1-KDM2A complex interacts with UBB. Part of a SCF (SKP1-cullin-F-box) protein ligase complex. Fe(2+) serves as cofactor. Mono-ADP-ribosylated at Arg-1020 in response to DNA damage, leading to displacement from chromatin, resulting in increased dimethylation of histone H3 at 'Lys-36'. As to expression, widely expressed, with highest levels in brain, testis and ovary, followed by lung.

It localises to the nucleus. Its subcellular location is the nucleoplasm. The protein localises to the chromosome. The catalysed reaction is N(6),N(6)-dimethyl-L-lysyl(36)-[histone H3] + 2 2-oxoglutarate + 2 O2 = L-lysyl(36)-[histone H3] + 2 formaldehyde + 2 succinate + 2 CO2. Its function is as follows. Histone demethylase that specifically demethylates 'Lys-36' of histone H3, thereby playing a central role in histone code. Preferentially demethylates dimethylated H3 'Lys-36' residue while it has weak or no activity for mono- and tri-methylated H3 'Lys-36'. May also recognize and bind to some phosphorylated proteins and promote their ubiquitination and degradation. Required to maintain the heterochromatic state. Associates with centromeres and represses transcription of small non-coding RNAs that are encoded by the clusters of satellite repeats at the centromere. Required to sustain centromeric integrity and genomic stability, particularly during mitosis. Regulates circadian gene expression by repressing the transcriptional activator activity of CLOCK-BMAL1 heterodimer and RORA in a catalytically-independent manner. The sequence is that of Lysine-specific demethylase 2A (KDM2A) from Homo sapiens (Human).